Here is a 207-residue protein sequence, read N- to C-terminus: Uracil phosphoribosyltransferase (207 aa).

5-phospho-alpha-D-ribose 1-diphosphate is bound by residues Arg-77, Arg-102, and 129 to 137 (DPMVATGGS). Uracil contacts are provided by residues Ile-192 and 197–199 (GDA). Position 198 (Asp-198) interacts with 5-phospho-alpha-D-ribose 1-diphosphate.

This sequence belongs to the UPRTase family. Mg(2+) is required as a cofactor.

The enzyme catalyses UMP + diphosphate = 5-phospho-alpha-D-ribose 1-diphosphate + uracil. Its pathway is pyrimidine metabolism; UMP biosynthesis via salvage pathway; UMP from uracil: step 1/1. With respect to regulation, allosterically activated by GTP. Its function is as follows. Catalyzes the conversion of uracil and 5-phospho-alpha-D-ribose 1-diphosphate (PRPP) to UMP and diphosphate. This Mycobacterium bovis (strain ATCC BAA-935 / AF2122/97) protein is Uracil phosphoribosyltransferase.